We begin with the raw amino-acid sequence, 110 residues long: Nucleoid-associated protein Sfum_2790 (110 aa).

This sequence belongs to the YbaB/EbfC family. As to quaternary structure, homodimer.

It is found in the cytoplasm. Its subcellular location is the nucleoid. Functionally, binds to DNA and alters its conformation. May be involved in regulation of gene expression, nucleoid organization and DNA protection. The sequence is that of Nucleoid-associated protein Sfum_2790 from Syntrophobacter fumaroxidans (strain DSM 10017 / MPOB).